The following is a 152-amino-acid chain: MYMDRHCVYYRKPLLESGTLGTKGNIQVVIPFLTESYSSSQDPPEKSIPICTLKNFPNAIEHTLQWARDEFESLFKQPAENVNQYLTNPKFVERTLRLGGTQPLEVLEAVHRSLVLQRPHDWADCVTWACLHWHSQYANNIRQLLHNFPPEQ.

The active-site Glycyl thioester intermediate is the Cys51.

The protein belongs to the ubiquitin-activating E1 family. In terms of assembly, monomer.

It carries out the reaction ATP + ubiquitin + [E1 ubiquitin-activating enzyme]-L-cysteine = AMP + diphosphate + S-ubiquitinyl-[E1 ubiquitin-activating enzyme]-L-cysteine.. It participates in protein modification; protein ubiquitination. In terms of biological role, activates ubiquitin by first adenylating its C-terminal glycine residue with ATP, and thereafter linking this residue to the side chain of a cysteine residue in E1, yielding a ubiquitin-E1 thioester and free AMP. The Y chromosome form could be involved in the survival and proliferation of differentiating spermatogonia. The sequence is that of Ubiquitin-activating enzyme E1 Y (UBE1Y) from Osphranter rufus (Red kangaroo).